The sequence spans 349 residues: Magnesium-protoporphyrin IX monomethyl ester [oxidative] cyclase (349 aa).

Positions Met1 to Thr10 are enriched in low complexity. The disordered stretch occupies residues Met1–Leu23.

The protein belongs to the AcsF family. Fe cation serves as cofactor.

It carries out the reaction Mg-protoporphyrin IX 13-monomethyl ester + 3 NADPH + 3 O2 + 2 H(+) = 3,8-divinyl protochlorophyllide a + 3 NADP(+) + 5 H2O. The protein operates within porphyrin-containing compound metabolism; chlorophyll biosynthesis (light-independent). Its function is as follows. Catalyzes the formation of the isocyclic ring in chlorophyll biosynthesis. Mediates the cyclase reaction, which results in the formation of divinylprotochlorophyllide (Pchlide) characteristic of all chlorophylls from magnesium-protoporphyrin IX 13-monomethyl ester (MgPMME). In Prochlorococcus marinus (strain MIT 9313), this protein is Magnesium-protoporphyrin IX monomethyl ester [oxidative] cyclase.